The sequence spans 496 residues: L-arabinose isomerase (496 aa).

4 residues coordinate Mn(2+): E302, E329, H346, and H445.

This sequence belongs to the arabinose isomerase family. It depends on Mn(2+) as a cofactor.

It carries out the reaction beta-L-arabinopyranose = L-ribulose. The protein operates within carbohydrate degradation; L-arabinose degradation via L-ribulose; D-xylulose 5-phosphate from L-arabinose (bacterial route): step 1/3. Its function is as follows. Catalyzes the conversion of L-arabinose to L-ribulose. The protein is L-arabinose isomerase of Thermotoga sp. (strain RQ2).